The chain runs to 573 residues: 60 kDa heat shock protein, mitochondrial (573 aa).

The N-terminal 26 residues, 1–26, are a transit peptide targeting the mitochondrion; that stretch reads MLRLPAVLRQIRPVSRALAPHLTRAY. Residues K75 and 111 to 115 contribute to the ATP site; that span reads DGTTT. Phosphotyrosine is present on Y227. Residues G440 and D520 each coordinate ATP.

The protein localises to the mitochondrion matrix. It carries out the reaction ATP + H2O + a folded polypeptide = ADP + phosphate + an unfolded polypeptide.. Its function is as follows. Chaperonin implicated in mitochondrial protein import and macromolecular assembly. Together with Hsp10, facilitates the correct folding of imported proteins. May also prevent misfolding and promote the refolding and proper assembly of unfolded polypeptides generated under stress conditions in the mitochondrial matrix. The functional units of these chaperonins consist of heptameric rings of the large subunit Hsp60, which function as a back-to-back double ring. In a cyclic reaction, Hsp60 ring complexes bind one unfolded substrate protein per ring, followed by the binding of ATP and association with 2 heptameric rings of the co-chaperonin Hsp10. This leads to sequestration of the substrate protein in the inner cavity of Hsp60 where, for a certain period of time, it can fold undisturbed by other cell components. Synchronous hydrolysis of ATP in all Hsp60 subunits results in the dissociation of the chaperonin rings and the release of ADP and the folded substrate protein. The polypeptide is 60 kDa heat shock protein, mitochondrial (Gallus gallus (Chicken)).